The chain runs to 300 residues: Protein ARMCX6 (300 aa).

Residues 1–6 lie on the Mitochondrial intermembrane side of the membrane; that stretch reads MGRARE. Mitochondrion outer membrane (MOM)-targeting sequence stretches follow at residues 1–6 and 26–36; these read MGRARE and KLTIGRDDSEK. Residues 7–27 form a helical; Signal-anchor membrane-spanning segment; that stretch reads VGWMAAGLMIGAGACYCVYKL. The Cytoplasmic segment spans residues 28–300; it reads TIGRDDSEKL…REILLETPAP (273 aa). Disordered regions lie at residues 35–54 and 69–99; these read EKLEEEGEEEWDDDQELDEE and WTEDGDWTEPGAPGGTEDRPSGGGKANRAHP.

It belongs to the eutherian X-chromosome-specific Armcx family.

Its subcellular location is the mitochondrion. It localises to the mitochondrion outer membrane. Its function is as follows. May regulate the dynamics and distribution of mitochondria in neural cells. The chain is Protein ARMCX6 (ARMCX6) from Homo sapiens (Human).